Consider the following 1015-residue polypeptide: Putative calcium-transporting ATPase 7, plasma membrane-type (1015 aa).

At Met-1 the chain carries N-acetylmethionine. The Cytoplasmic segment spans residues 1–161; that stretch reads MESYLNSNFD…NKFAESELRS (161 aa). Residues 20-31 form an interaction with calmodulin region; sequence VLEKWRNLCSVV. Ser-45 bears the Phosphoserine; by CPK mark. A helical membrane pass occupies residues 162–182; that stretch reads FWVFVWEALQDMTLMILGVCA. Topologically, residues 183–200 are lumenal; the sequence is FVSLIVGIATEGWPQGSH. The helical transmembrane segment at 201 to 221 threads the bilayer; that stretch reads DGLGIVASILLVVFVTATSDY. At 222–349 the chain is on the cytoplasmic side; that stretch reads RQSLQFRDLD…DDETPLQVKL (128 aa). The helical transmembrane segment at 350-369 threads the bilayer; that stretch reads NGVATIIGKIGLSFAIVTFA. The Lumenal segment spans residues 370–399; it reads VLVQGMFMRKLSLGPHWWWSGDDALELLEY. The chain crosses the membrane as a helical span at residues 400–417; that stretch reads FAIAVTIVVVAVPEGLPL. At 418–811 the chain is on the cytoplasmic side; that stretch reads AVTLSLAFAM…KWGRSVYINI (394 aa). The active-site 4-aspartylphosphate intermediate is Asp-455. Mg(2+)-binding residues include Asp-756 and Asp-760. Residues 812 to 830 form a helical membrane-spanning segment; that stretch reads QKFVQFQLTVNVVALIVNF. The Lumenal segment spans residues 831–841; that stretch reads SSACLTGSAPL. The chain crosses the membrane as a helical span at residues 842–862; that stretch reads TAVQLLWVNMIMDTLGALALA. The Cytoplasmic portion of the chain corresponds to 863-882; that stretch reads TEPPNNELMKRMPVGRRGNF. A helical membrane pass occupies residues 883 to 905; that stretch reads ITNAMWRNILGQAVYQFIIIWIL. Over 906–917 the chain is Lumenal; the sequence is QAKGKSMFGLVG. Residues 918–939 traverse the membrane as a helical segment; that stretch reads SDSTLVLNTLIFNCFVFCQVFN. Residues 940-957 lie on the Cytoplasmic side of the membrane; that stretch reads EVSSREMEEIDVFKGILD. The chain crosses the membrane as a helical span at residues 958 to 979; that stretch reads NYVFVVVIGATVFFQIIIIEFL. The Lumenal segment spans residues 980 to 989; sequence GTFASTTPLT. The chain crosses the membrane as a helical span at residues 990–1011; the sequence is IVQWFFSIFVGFLGMPIAAGLK. Residues 1012–1015 are Cytoplasmic-facing; the sequence is KIPV.

It belongs to the cation transport ATPase (P-type) (TC 3.A.3) family. Type IIB subfamily.

It localises to the membrane. The enzyme catalyses Ca(2+)(in) + ATP + H2O = Ca(2+)(out) + ADP + phosphate + H(+). Activated by calmodulin. This magnesium-dependent enzyme catalyzes the hydrolysis of ATP coupled with the translocation of calcium from the cytosol out of the cell or into organelles. The polypeptide is Putative calcium-transporting ATPase 7, plasma membrane-type (ACA7) (Arabidopsis thaliana (Mouse-ear cress)).